The following is a 433-amino-acid chain: Phosphomethylpyrimidine synthase (433 aa).

Residues Asn69, Met98, Tyr127, His163, 185-187 (SRG), 226-229 (DACR), and Glu265 contribute to the substrate site. His269 provides a ligand contact to Zn(2+). Position 292 (Tyr292) interacts with substrate. Zn(2+) is bound at residue His333. [4Fe-4S] cluster contacts are provided by Cys409, Cys412, and Cys416.

The protein belongs to the ThiC family. Requires [4Fe-4S] cluster as cofactor.

It catalyses the reaction 5-amino-1-(5-phospho-beta-D-ribosyl)imidazole + S-adenosyl-L-methionine = 4-amino-2-methyl-5-(phosphooxymethyl)pyrimidine + CO + 5'-deoxyadenosine + formate + L-methionine + 3 H(+). It participates in cofactor biosynthesis; thiamine diphosphate biosynthesis. Functionally, catalyzes the synthesis of the hydroxymethylpyrimidine phosphate (HMP-P) moiety of thiamine from aminoimidazole ribotide (AIR) in a radical S-adenosyl-L-methionine (SAM)-dependent reaction. This Clostridioides difficile (strain 630) (Peptoclostridium difficile) protein is Phosphomethylpyrimidine synthase.